Reading from the N-terminus, the 533-residue chain is MFLAVLYCLLWSFQISDGHFPRACASSKNLLAKECCPPWMGDGSPCGQLSGRGSCQDILLSSAPSGPQFPFKGVDDRESWPSVFYNRTCQCSGNFMGFNCGNCKFGFGGPNCTEKRVLIRRNIFDLSVSEKNKFFSYLTLAKHTISSVYVIPTGTYGQMNNGSTPMFNDINIYDLFVWMHYYVSRDTLLGGSEIWRDIDFAHEAPGFLPWHRLFLLLWEQEIRELTGDENFTVPYWDWRDAENCDICTDEYLGGRHPENPNLLSPASFFSSWQIICSRSEEYNSHQVLCDGTPEGPLLRNPGNHDKAKTPRLPSSADVEFCLSLTQYESGSMDRTANFSFRNTLEGFASPLTGIADPSQSSMHNALHIFMNGTMSQVQGSANDPIFLLHHAFVDSIFEQWLRRHRPLLEVYPEANAPIGHNRDSYMVPFIPLYRNGDFFITSKDLGYDYSYLQESDPGFYRNYIEPYLEQASRIWPWLLGAALVGAVIAAALSGLSSRLCLQKKKKKKQPQEERQPLLMDKDDYHSLLYQSHL.

The first 18 residues, 1–18, serve as a signal peptide directing secretion; it reads MFLAVLYCLLWSFQISDG. The Lumenal, melanosome portion of the chain corresponds to 19 to 476; sequence HFPRACASSK…YLEQASRIWP (458 aa). 3 N-linked (GlcNAc...) asparagine glycosylation sites follow: Asn86, Asn111, and Asn161. Positions 180, 202, and 211 each coordinate Cu cation. 2 N-linked (GlcNAc...) asparagine glycosylation sites follow: Asn230 and Asn337. Residues His363 and His367 each contribute to the Cu cation site. Asn371 carries an N-linked (GlcNAc...) asparagine glycan. Residue His390 participates in Cu cation binding. A helical membrane pass occupies residues 477-497; it reads WLLGAALVGAVIAAALSGLSS. The Cytoplasmic segment spans residues 498–533; it reads RLCLQKKKKKKQPQEERQPLLMDKDDYHSLLYQSHL.

This sequence belongs to the tyrosinase family. In terms of assembly, forms an OPN3-dependent complex with DCT in response to blue light in melanocytes. Requires Cu(2+) as cofactor. In terms of processing, glycosylated. As to expression, expressed in the skin.

The protein resides in the melanosome membrane. It is found in the melanosome. It catalyses the reaction 2 L-dopa + O2 = 2 L-dopaquinone + 2 H2O. It carries out the reaction L-tyrosine + O2 = L-dopaquinone + H2O. The catalysed reaction is 2 5,6-dihydroxyindole-2-carboxylate + O2 = 2 indole-5,6-quinone-2-carboxylate + 2 H2O. Functionally, this is a copper-containing oxidase that functions in the formation of pigments such as melanins and other polyphenolic compounds. Catalyzes the initial and rate limiting step in the cascade of reactions leading to melanin production from tyrosine. In addition to hydroxylating tyrosine to DOPA (3,4-dihydroxyphenylalanine), also catalyzes the oxidation of DOPA to DOPA-quinone, and possibly the oxidation of DHI (5,6-dihydroxyindole) to indole-5,6 quinone. The polypeptide is Tyrosinase (Tyr) (Mus musculus (Mouse)).